The primary structure comprises 278 residues: Undecaprenyl-diphosphatase 1 (278 aa).

A run of 7 helical transmembrane segments spans residues 1–21 (MFFG…TEFL), 43–63 (AFTT…VVLL), 83–103 (IWAT…IGFL), 112–132 (LMNW…FIFI), 192–212 (FSFF…IGSY), 224–244 (IVIL…VIKW), and 257–277 (FGWY…IGII).

It belongs to the UppP family.

Its subcellular location is the cell membrane. It carries out the reaction di-trans,octa-cis-undecaprenyl diphosphate + H2O = di-trans,octa-cis-undecaprenyl phosphate + phosphate + H(+). Functionally, catalyzes the dephosphorylation of undecaprenyl diphosphate (UPP). Confers resistance to bacitracin. This is Undecaprenyl-diphosphatase 1 from Oenococcus oeni (strain ATCC BAA-331 / PSU-1).